The primary structure comprises 397 residues: Ribosomal RNA large subunit methyltransferase I (397 aa).

Residues 2–80 (AIRIKLKPGR…KEEAIDADFF (79 aa)) enclose the PUA domain.

Belongs to the methyltransferase superfamily. RlmI family.

The protein resides in the cytoplasm. It catalyses the reaction cytidine(1962) in 23S rRNA + S-adenosyl-L-methionine = 5-methylcytidine(1962) in 23S rRNA + S-adenosyl-L-homocysteine + H(+). In terms of biological role, specifically methylates the cytosine at position 1962 (m5C1962) of 23S rRNA. The sequence is that of Ribosomal RNA large subunit methyltransferase I from Shewanella denitrificans (strain OS217 / ATCC BAA-1090 / DSM 15013).